The chain runs to 312 residues: Ribonuclease Z (312 aa).

Zn(2+)-binding residues include His-63, His-65, Asp-67, His-68, His-140, Asp-211, and His-269. Asp-67 functions as the Proton acceptor in the catalytic mechanism.

The protein belongs to the RNase Z family. Homodimer. Requires Zn(2+) as cofactor.

The catalysed reaction is Endonucleolytic cleavage of RNA, removing extra 3' nucleotides from tRNA precursor, generating 3' termini of tRNAs. A 3'-hydroxy group is left at the tRNA terminus and a 5'-phosphoryl group is left at the trailer molecule.. In terms of biological role, zinc phosphodiesterase, which displays some tRNA 3'-processing endonuclease activity. Probably involved in tRNA maturation, by removing a 3'-trailer from precursor tRNA. The chain is Ribonuclease Z from Shouchella clausii (strain KSM-K16) (Alkalihalobacillus clausii).